The following is a 277-amino-acid chain: Tryptophan synthase alpha chain (277 aa).

Catalysis depends on proton acceptor residues glutamate 51 and glutamate 62.

It belongs to the TrpA family. Tetramer of two alpha and two beta chains.

The enzyme catalyses (1S,2R)-1-C-(indol-3-yl)glycerol 3-phosphate + L-serine = D-glyceraldehyde 3-phosphate + L-tryptophan + H2O. The protein operates within amino-acid biosynthesis; L-tryptophan biosynthesis; L-tryptophan from chorismate: step 5/5. Functionally, the alpha subunit is responsible for the aldol cleavage of indoleglycerol phosphate to indole and glyceraldehyde 3-phosphate. The sequence is that of Tryptophan synthase alpha chain from Phenylobacterium zucineum (strain HLK1).